Reading from the N-terminus, the 143-residue chain is Large ribosomal subunit protein uL11 (143 aa).

Belongs to the universal ribosomal protein uL11 family. In terms of assembly, part of the ribosomal stalk of the 50S ribosomal subunit. Interacts with L10 and the large rRNA to form the base of the stalk. L10 forms an elongated spine to which L12 dimers bind in a sequential fashion forming a multimeric L10(L12)X complex. In terms of processing, one or more lysine residues are methylated.

Its function is as follows. Forms part of the ribosomal stalk which helps the ribosome interact with GTP-bound translation factors. The protein is Large ribosomal subunit protein uL11 of Thiobacillus denitrificans (strain ATCC 25259 / T1).